A 1073-amino-acid chain; its full sequence is Carbamoyl phosphate synthase large chain (1073 aa).

A carboxyphosphate synthetic domain region spans residues 1-399 (MPKREDIKKV…SLLKAFKSLD (399 aa)). ATP is bound by residues Arg-129, Arg-169, Gly-175, Gly-176, Glu-208, Val-210, Glu-215, Gly-241, Val-242, His-243, Gln-284, and Glu-296. An ATP-grasp 1 domain is found at 133-325 (KETMLSIGEK…IARVTAKIAI (193 aa)). Gln-284, Glu-296, and Asn-298 together coordinate Mg(2+). Residues Gln-284, Glu-296, and Asn-298 each contribute to the Mn(2+) site. Positions 400–540 (IDNQLGIKRW…YSTYEDTCET (141 aa)) are oligomerization domain. Positions 541-931 (NSTDKKKILI…YKAELAADNL (391 aa)) are carbamoyl phosphate synthetic domain. In terms of domain architecture, ATP-grasp 2 spans 672–863 (YLLMQELGIP…LAKIAAKVIA (192 aa)). ATP contacts are provided by Arg-708, Asp-747, Leu-749, Glu-754, Gly-779, Val-780, His-781, Ser-782, Gln-822, and Glu-834. Residues Gln-822, Glu-834, and Asn-836 each contribute to the Mg(2+) site. Mn(2+) is bound by residues Gln-822, Glu-834, and Asn-836. Residues 930-1071 (NLLPLTGKVF…NEYHKEMEQK (142 aa)) form the MGS-like domain. Positions 932–1073 (LPLTGKVFLS…YHKEMEQKEE (142 aa)) are allosteric domain.

Belongs to the CarB family. As to quaternary structure, composed of two chains; the small (or glutamine) chain promotes the hydrolysis of glutamine to ammonia, which is used by the large (or ammonia) chain to synthesize carbamoyl phosphate. Tetramer of heterodimers (alpha,beta)4. Mg(2+) is required as a cofactor. Requires Mn(2+) as cofactor.

The catalysed reaction is hydrogencarbonate + L-glutamine + 2 ATP + H2O = carbamoyl phosphate + L-glutamate + 2 ADP + phosphate + 2 H(+). The enzyme catalyses hydrogencarbonate + NH4(+) + 2 ATP = carbamoyl phosphate + 2 ADP + phosphate + 2 H(+). It participates in amino-acid biosynthesis; L-arginine biosynthesis; carbamoyl phosphate from bicarbonate: step 1/1. The protein operates within pyrimidine metabolism; UMP biosynthesis via de novo pathway; (S)-dihydroorotate from bicarbonate: step 1/3. In terms of biological role, large subunit of the glutamine-dependent carbamoyl phosphate synthetase (CPSase). CPSase catalyzes the formation of carbamoyl phosphate from the ammonia moiety of glutamine, carbonate, and phosphate donated by ATP, constituting the first step of 2 biosynthetic pathways, one leading to arginine and/or urea and the other to pyrimidine nucleotides. The large subunit (synthetase) binds the substrates ammonia (free or transferred from glutamine from the small subunit), hydrogencarbonate and ATP and carries out an ATP-coupled ligase reaction, activating hydrogencarbonate by forming carboxy phosphate which reacts with ammonia to form carbamoyl phosphate. In Methanosarcina mazei (strain ATCC BAA-159 / DSM 3647 / Goe1 / Go1 / JCM 11833 / OCM 88) (Methanosarcina frisia), this protein is Carbamoyl phosphate synthase large chain.